The following is a 78-amino-acid chain: Large ribosomal subunit protein bL28 (78 aa).

The segment at 1–29 is disordered; it reads MSAHCQVTGRKPSFGKSVSHSHRRTSRRW.

The protein belongs to the bacterial ribosomal protein bL28 family.

The polypeptide is Large ribosomal subunit protein bL28 (Corynebacterium glutamicum (strain ATCC 13032 / DSM 20300 / JCM 1318 / BCRC 11384 / CCUG 27702 / LMG 3730 / NBRC 12168 / NCIMB 10025 / NRRL B-2784 / 534)).